A 171-amino-acid polypeptide reads, in one-letter code: Shikimate kinase (171 aa).

Position 11-16 (11-16) interacts with ATP; that stretch reads ATGKTT. T15 is a Mg(2+) binding site. The substrate site is built by D33, R57, and G79. R117 contacts ATP. R136 provides a ligand contact to substrate.

This sequence belongs to the shikimate kinase family. Monomer. Mg(2+) is required as a cofactor.

It localises to the cytoplasm. It catalyses the reaction shikimate + ATP = 3-phosphoshikimate + ADP + H(+). It participates in metabolic intermediate biosynthesis; chorismate biosynthesis; chorismate from D-erythrose 4-phosphate and phosphoenolpyruvate: step 5/7. Its function is as follows. Catalyzes the specific phosphorylation of the 3-hydroxyl group of shikimic acid using ATP as a cosubstrate. In Thermoanaerobacter pseudethanolicus (strain ATCC 33223 / 39E) (Clostridium thermohydrosulfuricum), this protein is Shikimate kinase.